A 258-amino-acid chain; its full sequence is Ditrans,polycis-undecaprenyl-diphosphate synthase ((2E,6E)-farnesyl-diphosphate specific) (258 aa).

The active site involves Asp24. Residue Asp24 participates in Mg(2+) binding. Residues 25–28 (GNGR), Trp29, Arg37, His41, and 69–71 (SSE) each bind substrate. Catalysis depends on Asn72, which acts as the Proton acceptor. Residues Trp73, Arg75, Arg192, and 198 to 200 (RIS) contribute to the substrate site. Glu211 contacts Mg(2+).

The protein belongs to the UPP synthase family. As to quaternary structure, homodimer. It depends on Mg(2+) as a cofactor.

It catalyses the reaction 8 isopentenyl diphosphate + (2E,6E)-farnesyl diphosphate = di-trans,octa-cis-undecaprenyl diphosphate + 8 diphosphate. Functionally, catalyzes the sequential condensation of isopentenyl diphosphate (IPP) with (2E,6E)-farnesyl diphosphate (E,E-FPP) to yield (2Z,6Z,10Z,14Z,18Z,22Z,26Z,30Z,34E,38E)-undecaprenyl diphosphate (di-trans,octa-cis-UPP). UPP is the precursor of glycosyl carrier lipid in the biosynthesis of bacterial cell wall polysaccharide components such as peptidoglycan and lipopolysaccharide. This chain is Ditrans,polycis-undecaprenyl-diphosphate synthase ((2E,6E)-farnesyl-diphosphate specific), found in Xanthomonas campestris pv. campestris (strain ATCC 33913 / DSM 3586 / NCPPB 528 / LMG 568 / P 25).